The sequence spans 1011 residues: Beta-galactosidase A (1011 aa).

The first 19 residues, 1-19, serve as a signal peptide directing secretion; it reads MKLLSSWVVAALAAQAAGA. Substrate is bound by residues Tyr-96, 140–142, and Asn-199; that span reads NAE. Glu-200 functions as the Proton donor in the catalytic mechanism. Intrachain disulfides connect Cys-205/Cys-206 and Cys-267/Cys-316. Glu-299 serves as the catalytic Nucleophile. Tyr-365 is a binding site for substrate. Asn-374, Asn-456, Asn-625, Asn-707, Asn-763, Asn-780, and Asn-917 each carry an N-linked (GlcNAc...) asparagine glycan.

Belongs to the glycosyl hydrolase 35 family. As to quaternary structure, monomer.

The protein resides in the secreted. The enzyme catalyses Hydrolysis of terminal non-reducing beta-D-galactose residues in beta-D-galactosides.. Cleaves beta-linked terminal galactosyl residues from gangliosides, glycoproteins, and glycosaminoglycans. Has high in vitro transglycosylation activity with p-nitrophenyl-beta-D-galactopyranoside, methyl-beta-D-galactopyranoside or lactose as a donor and galactose as an acceptor. This chain is Beta-galactosidase A (lacA), found in Penicillium sp.